The chain runs to 259 residues: tRNA pseudouridine synthase A (259 aa).

D50 acts as the Nucleophile in catalysis. Y101 contributes to the substrate binding site.

This sequence belongs to the tRNA pseudouridine synthase TruA family.

The catalysed reaction is uridine(38/39/40) in tRNA = pseudouridine(38/39/40) in tRNA. Functionally, formation of pseudouridine at positions 38, 39 and 40 in the anticodon stem and loop of transfer RNAs. In Methanocaldococcus jannaschii (strain ATCC 43067 / DSM 2661 / JAL-1 / JCM 10045 / NBRC 100440) (Methanococcus jannaschii), this protein is tRNA pseudouridine synthase A.